We begin with the raw amino-acid sequence, 290 residues long: Type II secretion system protein C (290 aa).

Over 1 to 28 the chain is Cytoplasmic; the sequence is MTLPFRDDLLSSLLARCKTVPLSRFSQP. A helical membrane pass occupies residues 29–46; the sequence is LFWLLLLLLAHQCAGLTW. At 47 to 290 the chain is on the periplasmic side; that stretch reads RLLDLGSQQS…LYDVYVGLSE (244 aa).

Belongs to the GSP C family.

It is found in the cell inner membrane. In terms of biological role, involved in a type II secretion system (T2SS, formerly general secretion pathway, GSP) for the export of proteins. The chain is Type II secretion system protein C (exeC) from Aeromonas salmonicida.